Consider the following 94-residue polypeptide: Protein SKIP34 (94 aa).

The interval 1 to 27 (MCYGHNQSLSSRSSLRRRSHDGEDDSV) is disordered. A coiled-coil region spans residues 23-61 (EDDSVVDDLRDRLAETEARLRRARAREAELSRRLEHMKR).

As to quaternary structure, interacts with SPK1B/ASK2.

The chain is Protein SKIP34 (SKIP34) from Arabidopsis thaliana (Mouse-ear cress).